We begin with the raw amino-acid sequence, 246 residues long: DNA polymerase sliding clamp (246 aa).

The protein belongs to the PCNA family. In terms of assembly, homotrimer. The subunits circularize to form a toroid; DNA passes through its center. Replication factor C (RFC) is required to load the toroid on the DNA.

Functionally, sliding clamp subunit that acts as a moving platform for DNA processing. Responsible for tethering the catalytic subunit of DNA polymerase and other proteins to DNA during high-speed replication. The chain is DNA polymerase sliding clamp from Thermoplasma acidophilum (strain ATCC 25905 / DSM 1728 / JCM 9062 / NBRC 15155 / AMRC-C165).